We begin with the raw amino-acid sequence, 185 residues long: Ribosome-recycling factor (185 aa).

The protein belongs to the RRF family.

The protein resides in the cytoplasm. Functionally, responsible for the release of ribosomes from messenger RNA at the termination of protein biosynthesis. May increase the efficiency of translation by recycling ribosomes from one round of translation to another. The sequence is that of Ribosome-recycling factor from Neorickettsia sennetsu (strain ATCC VR-367 / Miyayama) (Ehrlichia sennetsu).